The following is a 549-amino-acid chain: MQADFVIIGSGSAGSALAYRLSEGGKNSVIVIEAGGSDFGPFIQMPAALAWPMSMKRYNWGYLSEPEANLNNRRITAPRGKVIGGSSSINGMVYVRGHAEDFNRWEELGASGWAYADVLPYFKRMEHSHGGEEGWRGTDGPLHVQRGGFTNPLFQAFVEAGKQAGFETTEDYNGSKQEGFGLMEQTIFGGRRWSAANAYLKPALKRDNVKIVYGLAQRIVIEDGRATGVEIERNGRIEVVKANREVIVSASSFNSPKLLMLSGIGPGQHLQDMGIAVKADRPGVGANLQDHMEFYFQQVSTKPVSLYSWLPWFWQGVAGAQWLLSRGGLGASNQFEACAFLRSAPGLKQPDIQYHFLPVAISYDGKAAAKSHGFQVHVGYNLSKSRGSVSLRSADPKADPVLRFNYMSHAEDWEKFRHCVRLTREIFGQSAFHDYRGPEIQPGEGVQSDEEIDAFLREHLESAYHPCGTCRMGAKDDPMAVVDPQTRVIGIDGLRVADSSIFPHVTYGNLNGPSIMTGEKAADHILGKQPLARSNQEPWINPRAAVSDR.

4 to 33 lines the FAD pocket; sequence DFVIIGSGSAGSALAYRLSEGGKNSVIVIE. The Proton acceptor role is filled by histidine 465.

Belongs to the GMC oxidoreductase family. Requires FAD as cofactor.

The catalysed reaction is choline + A = betaine aldehyde + AH2. It catalyses the reaction betaine aldehyde + NAD(+) + H2O = glycine betaine + NADH + 2 H(+). It participates in amine and polyamine biosynthesis; betaine biosynthesis via choline pathway; betaine aldehyde from choline (cytochrome c reductase route): step 1/1. In terms of biological role, involved in the biosynthesis of the osmoprotectant glycine betaine. Catalyzes the oxidation of choline to betaine aldehyde and betaine aldehyde to glycine betaine at the same rate. This is Oxygen-dependent choline dehydrogenase from Rhizobium johnstonii (strain DSM 114642 / LMG 32736 / 3841) (Rhizobium leguminosarum bv. viciae).